We begin with the raw amino-acid sequence, 236 residues long: Transmembrane protein 65 (236 aa).

The transit peptide at 1 to 57 (MSRLLPLLRSRTARSLRPGPAAAAAPRPPSWCCCGRGLLALAAPGGPRALGTHPKKE) directs the protein to the mitochondrion. Residues 58 to 106 (PIEALNTAQGARDFIYSLHSSERSCLLKELHRFESIAIAQEKLEAQPPT) lie on the Cytoplasmic side of the membrane. The helical transmembrane segment at 107 to 127 (PGQLRYVFIHNAIPFIGFGFL) threads the bilayer. Residues 128–138 (DNAIMIVAGTH) lie on the Extracellular side of the membrane. A helical membrane pass occupies residues 139-161 (IELSIGIILGISTMAAAALGNLV). Residues 162–205 (SDLAGLGLAGYVEALASRLGLSIPDLSPKQVDMWQTRVSSHLGK) are Cytoplasmic-facing. Residues 206-226 (AVGVTIGCILGMFPLIFFGGG) traverse the membrane as a helical segment. The Extracellular segment spans residues 227-236 (EDDEKLEKKN).

As to quaternary structure, monomer. Homodimer. Interacts with GJA1. Interacts weakly with DSP. Interacts with SCN1B.

It localises to the cell membrane. The protein localises to the mitochondrion inner membrane. Functionally, essential for maintaining proper cardiac intercalated disk (ICD) structure and function as well as cardiac conduction velocity in the heart. Its association with SCN1B is required for stabilizing the perinexus in the ICD and for localization of GJA1 and SCN5A to the ICD. May regulate the function of the gap junction protein GJA1 and may contribute to the stability and proper localization of GJA1 to cardiac intercalated disk thereby regulating gap junction communication. Regulates mitochondrial respiration and mitochondrial DNA copy number maintenance. This Bos taurus (Bovine) protein is Transmembrane protein 65 (TMEM65).